Reading from the N-terminus, the 362-residue chain is Beta-ketoacyl-[acyl-carrier-protein] synthase III 2 (362 aa).

Residues Cys113 and His251 contribute to the active site. Residues 252–256 (QANIR) are ACP-binding. The active site involves Asn281.

The protein belongs to the thiolase-like superfamily. FabH family. In terms of assembly, homodimer.

Its subcellular location is the cytoplasm. The catalysed reaction is malonyl-[ACP] + acetyl-CoA + H(+) = 3-oxobutanoyl-[ACP] + CO2 + CoA. The protein operates within lipid metabolism; fatty acid biosynthesis. In terms of biological role, catalyzes the condensation reaction of fatty acid synthesis by the addition to an acyl acceptor of two carbons from malonyl-ACP. Catalyzes the first condensation reaction which initiates fatty acid synthesis and may therefore play a role in governing the total rate of fatty acid production. Possesses both acetoacetyl-ACP synthase and acetyl transacylase activities. Its substrate specificity determines the biosynthesis of branched-chain and/or straight-chain of fatty acids. The polypeptide is Beta-ketoacyl-[acyl-carrier-protein] synthase III 2 (Vibrio vulnificus (strain YJ016)).